Consider the following 164-residue polypeptide: uncharacterized protein (164 aa).

This is an uncharacterized protein from Caenorhabditis elegans.